Here is a 154-residue protein sequence, read N- to C-terminus: Myoglobin (154 aa).

A Globin domain is found at 2 to 148 (GLSDDEWHHV…FRNDMASKYK (147 aa)). Residue His65 coordinates nitrite. His65 is a binding site for O2. Heme b is bound at residue His94.

This sequence belongs to the globin family. As to quaternary structure, monomeric.

The protein resides in the cytoplasm. It is found in the sarcoplasm. The catalysed reaction is Fe(III)-heme b-[protein] + nitric oxide + H2O = Fe(II)-heme b-[protein] + nitrite + 2 H(+). It catalyses the reaction H2O2 + AH2 = A + 2 H2O. In terms of biological role, monomeric heme protein which primary function is to store oxygen and facilitate its diffusion within muscle tissues. Reversibly binds oxygen through a pentacoordinated heme iron and enables its timely and efficient release as needed during periods of heightened demand. Depending on the oxidative conditions of tissues and cells, and in addition to its ability to bind oxygen, it also has a nitrite reductase activity whereby it regulates the production of bioactive nitric oxide. Under stress conditions, like hypoxia and anoxia, it also protects cells against reactive oxygen species thanks to its pseudoperoxidase activity. In Graptemys geographica (Common map turtle), this protein is Myoglobin (MB).